The primary structure comprises 274 residues: MAD2L1-binding protein (274 aa).

The interaction with MAD2L1 stretch occupies residues alanine 45–lysine 78. At serine 102 the chain carries Phosphoserine.

This sequence belongs to the MAD2L1BP family. Interacts with MAD2L1.

It localises to the nucleus. The protein localises to the cytoplasm. It is found in the cytoskeleton. The protein resides in the spindle. Its function is as follows. May function to silence the spindle checkpoint and allow mitosis to proceed through anaphase by binding MAD2L1 after it has become dissociated from the MAD2L1-CDC20 complex. The protein is MAD2L1-binding protein (MAD2L1BP) of Homo sapiens (Human).